The sequence spans 307 residues: Exosome complex component RRP45A (307 aa).

The protein belongs to the RNase PH family. As to expression, expressed in roots, leaves, stems, buds and siliques.

The protein localises to the cytoplasm. Its subcellular location is the nucleus. Functionally, probable 3'-&gt;5' exoribonuclease involved in the regulation of cuticular wax biosynthesis. Can perform exosomal functions and partially complement the yeast rrp45 null mutant. The protein is Exosome complex component RRP45A of Arabidopsis thaliana (Mouse-ear cress).